We begin with the raw amino-acid sequence, 304 residues long: Aspartate carbamoyltransferase catalytic subunit (304 aa).

Residues R49 and T50 each contribute to the carbamoyl phosphate site. L-aspartate is bound at residue K77. Residues R99, H127, and Q130 each contribute to the carbamoyl phosphate site. Positions 160 and 211 each coordinate L-aspartate. Carbamoyl phosphate-binding residues include A250 and P251. S303 bears the Phosphoserine mark.

This sequence belongs to the aspartate/ornithine carbamoyltransferase superfamily. ATCase family. Heterododecamer (2C3:3R2) of six catalytic PyrB chains organized as two trimers (C3), and six regulatory PyrI chains organized as three dimers (R2).

The catalysed reaction is carbamoyl phosphate + L-aspartate = N-carbamoyl-L-aspartate + phosphate + H(+). It functions in the pathway pyrimidine metabolism; UMP biosynthesis via de novo pathway; (S)-dihydroorotate from bicarbonate: step 2/3. Catalyzes the condensation of carbamoyl phosphate and aspartate to form carbamoyl aspartate and inorganic phosphate, the committed step in the de novo pyrimidine nucleotide biosynthesis pathway. This is Aspartate carbamoyltransferase catalytic subunit from Bacillus subtilis (strain 168).